The following is a 474-amino-acid chain: E3 ubiquitin-protein ligase RNF14 (474 aa).

The region spanning 11–137 (DELLALASIY…QFLKEETLAY (127 aa)) is the RWD domain. The D-box motif lies at 37–45 (RIYLDLPQN). The segment at 216–457 (KLFLCSICFC…DPGSPCFNRL (242 aa)) is TRIAD supradomain. The Zn(2+) site is built by Cys-220, Cys-223, Cys-238, His-240, Cys-243, Cys-246, Cys-265, Cys-270, Cys-309, Cys-314, Cys-329, Cys-332, Cys-337, Cys-340, and His-345. The RING-type 1 zinc finger occupies 220–270 (CSICFCEKLGSECMYFLECRHVYCKACLKDYFEIQIRDGQVQCLNCPEPKC). The IBR-type zinc-finger motif lies at 289 to 350 (ARYDRLLLQS…RLTYHGVSPC (62 aa)). The residue at position 348 (Ser-348) is a Phosphoserine. Cys-350 contributes to the Zn(2+) binding site. A coiled-coil region spans residues 351–395 (KVTAEKLMDLRNEYLQADEANKRLLDQRYGKRVIQKALEEMESKE). An interaction with androgen receptor region spans residues 361-474 (RNEYLQADEA…DDIWEDEVED (114 aa)). The Zn(2+) site is built by Cys-404 and Cys-407. An RING-type 2; atypical zinc finger spans residues 404–433 (CPCCGTPIEKLDGCNKMTCTGCMQYFCWIC). Cys-417 is a catalytic residue. The Zn(2+) site is built by Cys-422, Cys-425, Cys-430, Cys-433, His-445, and Cys-453.

The protein belongs to the RBR family. RNF14 subfamily. In terms of assembly, interacts with GCN1; interaction takes place in response to ribosome collisions and is required for ubiquitination of EEF1A1/eEF1A. Interacts with the ubiquitin-conjugating enzymes UBE2E1 and UBE2E2. Interacts with AR/androgen receptor. Interacts with TCF7/TCF1, TCF7L1/TCF3 and TCF7L2/TCF4; promoting Wnt signaling. Post-translationally, RING-type zinc finger-dependent and UBE2E2-dependent autoubiquitination. As to expression, widely expressed.

It is found in the cytoplasm. It localises to the nucleus. The enzyme catalyses [E2 ubiquitin-conjugating enzyme]-S-ubiquitinyl-L-cysteine + [acceptor protein]-L-lysine = [E2 ubiquitin-conjugating enzyme]-L-cysteine + [acceptor protein]-N(6)-ubiquitinyl-L-lysine.. It participates in protein modification; protein ubiquitination. Functionally, E3 ubiquitin-protein ligase that plays a key role in the RNF14-RNF25 translation quality control pathway, a pathway that takes place when a ribosome has stalled during translation, and which promotes ubiquitination and degradation of translation factors on stalled ribosomes. Recruited to stalled ribosomes by the ribosome collision sensor GCN1 and mediates 'Lys-6'-linked ubiquitination of target proteins, leading to their degradation. Mediates ubiquitination of EEF1A1/eEF1A and ETF1/eRF1 translation factors on stalled ribosomes, leading to their degradation. Also catalyzes ubiquitination of ribosomal proteins RPL0, RPL1, RPL12, RPS13 and RPS17. Specifically required to resolve RNA-protein cross-links caused by reactive aldehydes, which trigger translation stress by stalling ribosomes: acts by catalying 'Lys-6'-linked ubiquitination of RNA-protein cross-links, leading to their removal by the ATP-dependent unfoldase VCP and subsequent degradation by the proteasome. Independently of its function in the response to stalled ribosomes, acts as a regulator of transcription in Wnt signaling via its interaction with TCF transcription factors (TCF7/TCF1, TCF7L1/TCF3 and TCF7L2/TCF4). May also play a role as a coactivator for androgen- and, to a lesser extent, progesterone-dependent transcription. The polypeptide is E3 ubiquitin-protein ligase RNF14 (Homo sapiens (Human)).